Reading from the N-terminus, the 350-residue chain is Cyclin-O (350 aa).

The tract at residues 1 to 89 (MVTPCPTSPS…GSPLPGPAQP (89 aa)) is disordered. Positions 28 to 42 (PVKKSRRPRLRRKQP) are enriched in basic residues. A Phosphoserine modification is found at Ser-81.

Belongs to the cyclin family. In terms of tissue distribution, present in respiratory cells (at protein level).

The protein localises to the cytoplasm. The protein resides in the nucleus. It localises to the nucleolus. Specifically required for generation of multiciliated cells, possibly by promoting a cell cycle state compatible with centriole amplification and maturation. Acts downstream of MCIDAS to promote mother centriole amplification and maturation in preparation for apical docking. This chain is Cyclin-O, found in Homo sapiens (Human).